Consider the following 59-residue polypeptide: Large ribosomal subunit protein uL30 (59 aa).

Belongs to the universal ribosomal protein uL30 family. As to quaternary structure, part of the 50S ribosomal subunit.

The chain is Large ribosomal subunit protein uL30 from Aeromonas hydrophila subsp. hydrophila (strain ATCC 7966 / DSM 30187 / BCRC 13018 / CCUG 14551 / JCM 1027 / KCTC 2358 / NCIMB 9240 / NCTC 8049).